The following is a 418-amino-acid chain: Tyrosine--tRNA ligase (418 aa).

An L-tyrosine-binding site is contributed by tyrosine 34. The 'HIGH' region signature appears at 39-48 (PTADSLHLGH). L-tyrosine-binding residues include tyrosine 169 and glutamine 173. The 'KMSKS' region motif lies at 229–233 (KFGKS). Lysine 232 is an ATP binding site. An S4 RNA-binding domain is found at 352–418 (LNIVEILVSS…GKKKYAVLTY (67 aa)).

It belongs to the class-I aminoacyl-tRNA synthetase family. TyrS type 1 subfamily. Homodimer.

The protein resides in the cytoplasm. The catalysed reaction is tRNA(Tyr) + L-tyrosine + ATP = L-tyrosyl-tRNA(Tyr) + AMP + diphosphate + H(+). Catalyzes the attachment of tyrosine to tRNA(Tyr) in a two-step reaction: tyrosine is first activated by ATP to form Tyr-AMP and then transferred to the acceptor end of tRNA(Tyr). This is Tyrosine--tRNA ligase from Streptococcus uberis (strain ATCC BAA-854 / 0140J).